Consider the following 246-residue polypeptide: Hsp70 nucleotide exchange factor fes-1 (246 aa).

The segment covering 23–40 (QSYHSNGAPTPNNNSGPA) has biased composition (polar residues). Residues 23–63 (QSYHSNGAPTPNNNSGPATGTGAVATSPAPQVTGSGPRPVD) are disordered. ARM repeat units follow at residues 48–92 (TSPA…DPSP), 113–152 (LDNA…TAVQ), 155–196 (QKTQ…SAVR), and 214–244 (HEVL…NKAK).

It belongs to the FES1 family.

The protein localises to the cytoplasm. In terms of biological role, functions as a nucleotide exchange factor (NEF) for Hsp70 chaperones which accelerates the release of ADP. Required for fully efficient Hsp70-mediated folding of proteins. This is Hsp70 nucleotide exchange factor fes-1 (fes-1) from Neurospora crassa (strain ATCC 24698 / 74-OR23-1A / CBS 708.71 / DSM 1257 / FGSC 987).